The chain runs to 85 residues: Protein MANBAL (85 aa).

Residues 24–44 form a helical membrane-spanning segment; the sequence is YGLFLGAIFQLICVLAIIVPI. A compositionally biased stretch (basic and acidic residues) spans 49 to 64; the sequence is EAEAEQAEPRSAEGPK. The interval 49–85 is disordered; that stretch reads EAEAEQAEPRSAEGPKKPKAAIASTNKRPKKETKKKR. Residues 75-85 show a composition bias toward basic residues; the sequence is KRPKKETKKKR.

It belongs to the UPF0239 family.

It is found in the membrane. In Mus musculus (Mouse), this protein is Protein MANBAL (Manbal).